Reading from the N-terminus, the 326-residue chain is Phosphatidylinositol:ceramide inositolphosphotransferase (326 aa).

6 helical membrane-spanning segments follow: residues 33–53 (LLLA…GVHY), 82–102 (SVFT…FIYH), 115–135 (VLAF…STQL), 169–189 (VLFG…LVFV), 199–219 (RLIK…IIAS), and 222–242 (HYSV…FFID). The active site involves His-181. Active-site residues include His-222 and Asp-226. Positions 306-326 (MNGKHGEDINHTLSDATPNGT) are disordered. Polar residues predominate over residues 316 to 326 (HTLSDATPNGT).

The protein belongs to the sphingomyelin synthase family.

It localises to the golgi apparatus. Its subcellular location is the trans-Golgi network membrane. Its function is as follows. Catalyzes the transfer of the phosphorylinositol group from phosphatidylinositol (PI) to phytoceramide, an essential step in sphingolipid biosynthesis. May play an important role in modulating plant programmed cell death (PCD) associated with defense (e.g. toward Golovinomyces cichoracearum) by promoting sphingolipid metabolism and regulating ceramide accumulation. This is Phosphatidylinositol:ceramide inositolphosphotransferase (ERH1) from Oryza sativa subsp. indica (Rice).